The chain runs to 79 residues: Cytochrome b (79 aa).

Helical transmembrane passes span 1-7, 31-52, and 67-79; these read SALFLAM, WLIRYMHANGSSLFFICLYLHI, and WNIGIILLFLTMA. Heme b is bound by residues histidine 37 and histidine 51.

This sequence belongs to the cytochrome b family. As to quaternary structure, the cytochrome bc1 complex contains 11 subunits: 3 respiratory subunits (MT-CYB, CYC1 and UQCRFS1), 2 core proteins (UQCRC1 and UQCRC2) and 6 low-molecular weight proteins (UQCRH/QCR6, UQCRB/QCR7, UQCRQ/QCR8, UQCR10/QCR9, UQCR11/QCR10 and a cleavage product of UQCRFS1). This cytochrome bc1 complex then forms a dimer. Requires heme b as cofactor.

It is found in the mitochondrion inner membrane. In terms of biological role, component of the ubiquinol-cytochrome c reductase complex (complex III or cytochrome b-c1 complex) that is part of the mitochondrial respiratory chain. The b-c1 complex mediates electron transfer from ubiquinol to cytochrome c. Contributes to the generation of a proton gradient across the mitochondrial membrane that is then used for ATP synthesis. The chain is Cytochrome b (MT-CYB) from Dipodomys californicus (California kangaroo rat).